The primary structure comprises 498 residues: Glycerol kinase (498 aa).

Threonine 14 contributes to the ADP binding site. The ATP site is built by threonine 14 and threonine 15. Position 14 (threonine 14) interacts with sn-glycerol 3-phosphate. Arginine 18 is a binding site for ADP. Arginine 84, glutamate 85, tyrosine 136, and aspartate 246 together coordinate sn-glycerol 3-phosphate. Positions 84, 85, 136, 246, and 247 each coordinate glycerol. Positions 268 and 311 each coordinate ADP. ATP-binding residues include threonine 268, glycine 311, glutamine 315, and glycine 412. 2 residues coordinate ADP: glycine 412 and asparagine 416.

The protein belongs to the FGGY kinase family.

It carries out the reaction glycerol + ATP = sn-glycerol 3-phosphate + ADP + H(+). The protein operates within polyol metabolism; glycerol degradation via glycerol kinase pathway; sn-glycerol 3-phosphate from glycerol: step 1/1. Its activity is regulated as follows. Inhibited by fructose 1,6-bisphosphate (FBP). In terms of biological role, key enzyme in the regulation of glycerol uptake and metabolism. Catalyzes the phosphorylation of glycerol to yield sn-glycerol 3-phosphate. The chain is Glycerol kinase from Leptospira biflexa serovar Patoc (strain Patoc 1 / Ames).